The primary structure comprises 259 residues: Phosphatidylglycerol--prolipoprotein diacylglyceryl transferase (259 aa).

The next 4 membrane-spanning stretches (helical) occupy residues 16–36 (FAIS…WFYA), 55–75 (FITY…VLLY), 92–112 (QGGM…YLFC), and 117–137 (VNFL…LFLG). A 1,2-diacyl-sn-glycero-3-phospho-(1'-sn-glycerol) is bound at residue R138. 3 helical membrane passes run 172-192 (QLYE…YATF), 201-221 (ALNL…IEIF), and 228-248 (IGFI…MLIL).

It belongs to the Lgt family.

The protein resides in the cell inner membrane. It carries out the reaction L-cysteinyl-[prolipoprotein] + a 1,2-diacyl-sn-glycero-3-phospho-(1'-sn-glycerol) = an S-1,2-diacyl-sn-glyceryl-L-cysteinyl-[prolipoprotein] + sn-glycerol 1-phosphate + H(+). The protein operates within protein modification; lipoprotein biosynthesis (diacylglyceryl transfer). Functionally, catalyzes the transfer of the diacylglyceryl group from phosphatidylglycerol to the sulfhydryl group of the N-terminal cysteine of a prolipoprotein, the first step in the formation of mature lipoproteins. The polypeptide is Phosphatidylglycerol--prolipoprotein diacylglyceryl transferase (Rickettsia canadensis (strain McKiel)).